Reading from the N-terminus, the 948-residue chain is Bifunctional uridylyltransferase/uridylyl-removing enzyme (948 aa).

Residues 1-372 (METHHIDFST…RFANRSRKIP (372 aa)) are uridylyltransferase. Positions 373 to 728 (GTVEFVEDRG…VRTDSFHAIT (356 aa)) are uridylyl-removing. Residues 489–605 (VDEHLIRAVE…IDFADRVQSL (117 aa)) form the HD domain. 2 consecutive ACT domains span residues 729–810 (EITV…EVIA) and 840–921 (VIEV…ERMP).

This sequence belongs to the GlnD family. Mg(2+) serves as cofactor.

The enzyme catalyses [protein-PII]-L-tyrosine + UTP = [protein-PII]-uridylyl-L-tyrosine + diphosphate. It carries out the reaction [protein-PII]-uridylyl-L-tyrosine + H2O = [protein-PII]-L-tyrosine + UMP + H(+). Its activity is regulated as follows. Uridylyltransferase (UTase) activity is inhibited by glutamine, while glutamine activates uridylyl-removing (UR) activity. Functionally, modifies, by uridylylation and deuridylylation, the PII regulatory proteins (GlnB and homologs), in response to the nitrogen status of the cell that GlnD senses through the glutamine level. Under low glutamine levels, catalyzes the conversion of the PII proteins and UTP to PII-UMP and PPi, while under higher glutamine levels, GlnD hydrolyzes PII-UMP to PII and UMP (deuridylylation). Thus, controls uridylylation state and activity of the PII proteins, and plays an important role in the regulation of nitrogen fixation and metabolism. The chain is Bifunctional uridylyltransferase/uridylyl-removing enzyme from Rhizobium tropici.